Here is a 122-residue protein sequence, read N- to C-terminus: MKPFVAIIFCFLILGVDSQRWFQFMKEAGQGTRDMWRAYTDMREANWKNSDKYFHARGNYDAAQRGPGGAWAAKVISDAREGFKRITGRGIEDSRADQFANEWGRSGKDPNFFRPPGLPSKY.

A signal peptide spans 1-18; it reads MKPFVAIIFCFLILGVDS. Positions 19-45 are important for amyloid formation; it reads QRWFQFMKEAGQGTRDMWRAYTDMREA. The interval 100–122 is disordered; sequence ANEWGRSGKDPNFFRPPGLPSKY.

It belongs to the SAA family. Homohexamer; dimer of trimers. Can form amyloid fibrils after partial proteolysis; the native, undenatured protein does not form amyloid fibrils (in vitro). Apolipoprotein of the HDL complex. Binds to heparin. In terms of tissue distribution, detected in liver, spleen and kidney.

The protein localises to the secreted. In terms of biological role, major acute phase protein. This Mesocricetus auratus (Golden hamster) protein is Serum amyloid A-1 protein (SAA1).